Here is a 317-residue protein sequence, read N- to C-terminus: MPRPGKSSYSEQKPPYSYISLTAMAIQGSQEKMLPLSDIYKFIMDRFPYYRENTQRWQNSLRHNLSFNDCFIKIPRRPDQPGKGSFWALHPNCGDMFENGSFLRRRKRFKVVRAEHLASKSHQMIHYFHHPHNQTKMGLPPSEGSPVPSLGRLPHFQSYNIGNISGNQTSGFKHPFAIENIIGRDYKGVMTGGLPLASMMHHLGYPVPSQISNMVSSMWPHVGMMDSMATMTVPQEYGHFGVPMKTLCHGPSQTIPAVPLPIKPTASLPPVSAIPSLAVNPSIMCPSPPAVAGTLLEPAISQPENKSSMLHSVLVHS.

A DNA-binding region (fork-head) is located at residues 13–107 (KPPYSYISLT…ENGSFLRRRK (95 aa)).

First expressed within the dorsolateral ectoderm, except for the organizer territory. During gastrulation, expressed in 2 ectodermal stripes adjacent to the dorsal midline. With the onset of neurulation, expression shifts first to the neural plate before settling on the bottom of the neural tube, on top of the notochord. Expression is then absent until stage 35, at which stage a pair of cells in the fourth rhombomere in the dorsolateral outer area of the rhombencephalon show expression. This is followed shortly afterwards by expression in a pair of cells in rhombomere 6 at the ventricular side of the rhombencephalon.

Its subcellular location is the nucleus. Functionally, transcription factor. This Xenopus laevis (African clawed frog) protein is Forkhead box protein B2.